Consider the following 145-residue polypeptide: UPF0201 protein LS215_1276 (145 aa).

The protein belongs to the UPF0201 family.

This is UPF0201 protein LS215_1276 from Saccharolobus islandicus (strain L.S.2.15 / Lassen #1) (Sulfolobus islandicus).